The chain runs to 285 residues: Small ribosomal subunit biogenesis GTPase RsgA (285 aa).

The CP-type G domain maps to 61–215 (KNQLIRPKVA…IIDSPGFSSF (155 aa)). GTP-binding positions include 110–113 (TKID) and 159–167 (GQTGVGKTS). 4 residues coordinate Zn(2+): Cys239, Cys244, His246, and Cys254.

It belongs to the TRAFAC class YlqF/YawG GTPase family. RsgA subfamily. In terms of assembly, monomer. Associates with 30S ribosomal subunit, binds 16S rRNA. Requires Zn(2+) as cofactor.

It is found in the cytoplasm. Its function is as follows. One of several proteins that assist in the late maturation steps of the functional core of the 30S ribosomal subunit. Helps release RbfA from mature subunits. May play a role in the assembly of ribosomal proteins into the subunit. Circularly permuted GTPase that catalyzes slow GTP hydrolysis, GTPase activity is stimulated by the 30S ribosomal subunit. In Mesomycoplasma hyopneumoniae (strain J / ATCC 25934 / NCTC 10110) (Mycoplasma hyopneumoniae), this protein is Small ribosomal subunit biogenesis GTPase RsgA.